The sequence spans 248 residues: Tetraspanin-16 (248 aa).

The Cytoplasmic portion of the chain corresponds to 1–7 (MSEIRTG). Residues 8–28 (FLTMATIILICIGLTMTGTGL) form a helical membrane-spanning segment. Residues 29–44 (YYRKTVSKCIRETDGS) lie on the Extracellular side of the membrane. A helical transmembrane segment spans residues 45-65 (FVVIGLLLLVIPQFALYAICC). Over 66–69 (HSKR) the chain is Cytoplasmic. Residues 70-90 (MFTIYIYAMIFVSIVLGGYSL) traverse the membrane as a helical segment. At 91–208 (KCFIYNTTFG…MSILKAIVHQ (118 aa)) the chain is on the extracellular side. 2 N-linked (GlcNAc...) asparagine glycosylation sites follow: Asn-96 and Asn-141. The helical transmembrane segment at 209–229 (WKYLSMFSYPALFLVCLSLAI) threads the bilayer. Residues 230 to 248 (SRSIMDTFDEPDDYRGYYS) lie on the Cytoplasmic side of the membrane.

It belongs to the tetraspanin (TM4SF) family.

The protein resides in the membrane. Functionally, may be involved in the regulation of cell differentiation. This Arabidopsis thaliana (Mouse-ear cress) protein is Tetraspanin-16 (TET16).